A 392-amino-acid polypeptide reads, in one-letter code: ATP phosphoribosyltransferase regulatory subunit (392 aa).

This sequence belongs to the class-II aminoacyl-tRNA synthetase family. HisZ subfamily. Heteromultimer composed of HisG and HisZ subunits.

The protein resides in the cytoplasm. It participates in amino-acid biosynthesis; L-histidine biosynthesis; L-histidine from 5-phospho-alpha-D-ribose 1-diphosphate: step 1/9. Its function is as follows. Required for the first step of histidine biosynthesis. May allow the feedback regulation of ATP phosphoribosyltransferase activity by histidine. This Prochlorococcus marinus (strain MIT 9313) protein is ATP phosphoribosyltransferase regulatory subunit.